Consider the following 196-residue polypeptide: Molybdenum cofactor guanylyltransferase (196 aa).

GTP is bound by residues 14–16 (LAG), lysine 27, aspartate 73, and aspartate 106. A Mg(2+)-binding site is contributed by aspartate 106.

It belongs to the MobA family. Monomer. It depends on Mg(2+) as a cofactor.

It localises to the cytoplasm. The enzyme catalyses Mo-molybdopterin + GTP + H(+) = Mo-molybdopterin guanine dinucleotide + diphosphate. Functionally, transfers a GMP moiety from GTP to Mo-molybdopterin (Mo-MPT) cofactor (Moco or molybdenum cofactor) to form Mo-molybdopterin guanine dinucleotide (Mo-MGD) cofactor. This chain is Molybdenum cofactor guanylyltransferase, found in Acidiphilium cryptum (strain JF-5).